Consider the following 69-residue polypeptide: DNA gyrase inhibitor YacG (69 aa).

The segment covering 1-15 (MSDEPEHTAKVEPLR) has biased composition (basic and acidic residues). The disordered stretch occupies residues 1–22 (MSDEPEHTAKVEPLRKPLPCPE). Cysteine 20, cysteine 23, cysteine 35, and cysteine 39 together coordinate Zn(2+).

Belongs to the DNA gyrase inhibitor YacG family. In terms of assembly, interacts with GyrB. Zn(2+) is required as a cofactor.

In terms of biological role, inhibits all the catalytic activities of DNA gyrase by preventing its interaction with DNA. Acts by binding directly to the C-terminal domain of GyrB, which probably disrupts DNA binding by the gyrase. In Allorhizobium ampelinum (strain ATCC BAA-846 / DSM 112012 / S4) (Agrobacterium vitis (strain S4)), this protein is DNA gyrase inhibitor YacG.